A 48-amino-acid chain; its full sequence is Photosystem II reaction center protein K (48 aa).

A propeptide spanning residues 1–11 (MFPSTNQEVLA) is cleaved from the precursor. Residues 23–43 (IVDVLPIIPLLFLLLAFVWQA) traverse the membrane as a helical segment.

This sequence belongs to the PsbK family. As to quaternary structure, PSII is composed of 1 copy each of membrane proteins PsbA, PsbB, PsbC, PsbD, PsbE, PsbF, PsbH, PsbI, PsbJ, PsbK, PsbL, PsbM, PsbT, PsbY, PsbZ, Psb30/Ycf12, at least 3 peripheral proteins of the oxygen-evolving complex and a large number of cofactors. It forms dimeric complexes.

The protein localises to the plastid. It is found in the chloroplast thylakoid membrane. Its function is as follows. One of the components of the core complex of photosystem II (PSII). PSII is a light-driven water:plastoquinone oxidoreductase that uses light energy to abstract electrons from H(2)O, generating O(2) and a proton gradient subsequently used for ATP formation. It consists of a core antenna complex that captures photons, and an electron transfer chain that converts photonic excitation into a charge separation. The protein is Photosystem II reaction center protein K of Euglena sanguinea.